The primary structure comprises 642 residues: Threonine--tRNA ligase (642 aa).

In terms of domain architecture, TGS spans 1 to 61 (MPVITLPDGS…ETDSELSIIT (61 aa)). The segment at 243–534 (DHRKIGKQLD…LIEEYAGKFP (292 aa)) is catalytic. Cysteine 334, histidine 385, and histidine 511 together coordinate Zn(2+).

This sequence belongs to the class-II aminoacyl-tRNA synthetase family. As to quaternary structure, homodimer. It depends on Zn(2+) as a cofactor.

The protein localises to the cytoplasm. It carries out the reaction tRNA(Thr) + L-threonine + ATP = L-threonyl-tRNA(Thr) + AMP + diphosphate + H(+). Catalyzes the attachment of threonine to tRNA(Thr) in a two-step reaction: L-threonine is first activated by ATP to form Thr-AMP and then transferred to the acceptor end of tRNA(Thr). Also edits incorrectly charged L-seryl-tRNA(Thr). In Shewanella halifaxensis (strain HAW-EB4), this protein is Threonine--tRNA ligase.